Reading from the N-terminus, the 1369-residue chain is Rho guanine nucleotide exchange factor 10 (1369 aa).

The segment at 1 to 106 (MRPPGFLSRA…ETTPVAEPTK (106 aa)) is disordered. Over residues 46-64 (NNEEEEGEQFDFDSGDEIP) the composition is skewed to acidic residues. The segment covering 83–100 (EAPAPTGGEDGAGAETTP) has biased composition (low complexity). At Ser-180 the chain carries Phosphoserine. A disordered region spans residues 184-254 (EAETPEVTED…ENSDSEPDEM (71 aa)). Polar residues predominate over residues 196-209 (PNSLSSEEPPTSED). A coiled-coil region spans residues 304–355 (KKQLSHDLTRLKEHYEKKMRDLMASTVGVVEIQQLRQKHELKMQKLVKAAKD). Ser-379 bears the Phosphoserine mark. Positions 421–608 (VRRYILGSVV…ETLAEKLNER (188 aa)) constitute a DH domain. 2 disordered regions span residues 1226–1260 (KDKS…LSQG) and 1277–1297 (QKSD…SSSL). Low complexity predominate over residues 1279–1296 (SDLSSSSGSLSLSHGSSS). Ser-1287 bears the Phosphoserine mark. At Gln-1338 the chain carries N5-methylglutamine.

Methylated at Gln-1338 by N6AMT1.

Functionally, may play a role in developmental myelination of peripheral nerves. This Homo sapiens (Human) protein is Rho guanine nucleotide exchange factor 10 (ARHGEF10).